The chain runs to 479 residues: Glutamate--tRNA ligase 2 (479 aa).

Residues 10-20 carry the 'HIGH' region motif; that stretch reads PSPTGSLHIGG. Positions 243–247 match the 'KMSKS' region motif; the sequence is KLSKR. K246 contributes to the ATP binding site.

The protein belongs to the class-I aminoacyl-tRNA synthetase family. Glutamate--tRNA ligase type 1 subfamily. As to quaternary structure, monomer.

It localises to the cytoplasm. The enzyme catalyses tRNA(Glu) + L-glutamate + ATP = L-glutamyl-tRNA(Glu) + AMP + diphosphate. In terms of biological role, catalyzes the attachment of glutamate to tRNA(Glu) in a two-step reaction: glutamate is first activated by ATP to form Glu-AMP and then transferred to the acceptor end of tRNA(Glu). The protein is Glutamate--tRNA ligase 2 of Thermoanaerobacter pseudethanolicus (strain ATCC 33223 / 39E) (Clostridium thermohydrosulfuricum).